Consider the following 965-residue polypeptide: MAESDGGEASPSGGGGGEGSPDPRRPPARPQLTKSRTISGSAASAFDRWGTSNSSSSILVRRSSTAPLPPGAAPRGLLTVAVDEPSYAAPNGGAAMLDRDWCYPSFLGPHASRPRPPRSQQQTPTTTAAAAADSRSPTPAAPPQTASVSQREEEKSLASVVKRPMLLDERRSLSPPPPQQRAPRFDLSPYLVLMLVVTVISFSLAIWQWMKATVLQEKIRSCCSVSTVDCKTTTEAFKINGQHGSDFINSADWNLASCSRMLVFAIPVFLVKYIDQLRRRNTDSIRLRSTEEEVPLKKRIAYKVDVFFSGHPYAKLLALLLATIILIASGGIALYVVSGSGFLEALWLSWTFVADSGNHADQVGLGPRIVSVSISSGGMLVFATMLGLVSDAISEKVDSWRKGKSEVIEVNHILILGWSDKLGSLLKQLAIANKSIGGGVVVVLAERDKEEMEMDIGKLEFDFMGTSVICRSGSPLILADLKKVSVSKARAIIVLASDENADQSDARALRVVLSLTGVKEGLRGHVVVEMSDLDNEPLVKLVGGELIETVVAHDVIGRLMIQCALQPGLAQIWEDILGFENAEFYIKRWPELDGMRFGDVLISFPDAVPCGVKIASKAGKILMNPDNDYVLQEGDEVLVIAEDDDTYVPASLPQVRKGFLPNIPTPPKYPEKILFCGWRRDIHDMIMVLEAFLAPGSELWMFNEVPEKERERKLTDGGMDIYGLTNIKLVHKEGNAVIRRHLESLPLETFDSILILADESVEDSIVHSDSRSLATLLLIRDIQSKRLPSKELKSPLRYNGFCHSSWIREMQHASDKSIIISEILDSRTRNLVSVSKISDYVLSNELVSMALAMVAEDKQINRVLEELFAEEGNEMCIRSAEFYLYEQEELSFFDIMVRARERDEVVIGYRLANDDQAIINPEQKSEIRKWSLDDVFVVISKAGNATYFVKTTVMRSNPVVYSSTF.

Positions 1–11 (MAESDGGEASP) are enriched in low complexity. Disordered stretches follow at residues 1–76 (MAES…APRG) and 108–158 (GPHA…KSLA). Polar residues predominate over residues 32–42 (LTKSRTISGSA). 2 stretches are compositionally biased toward low complexity: residues 52-66 (SNSSSSILVRRSSTA) and 118-149 (RSQQQTPTTTAAAAADSRSPTPAAPPQTASVS). Transmembrane regions (helical) follow at residues 187–207 (LSPYLVLMLVVTVISFSLAIW), 251–271 (ADWNLASCSRMLVFAIPVFLV), 317–337 (LALLLATIILIASGGIALYVV), and 369–389 (IVSVSISSGGMLVFATMLGLV). RCK N-terminal domains lie at 410-551 (VNHI…ETVV) and 670-818 (PEKI…DKSI).

This sequence belongs to the castor/pollux (TC 1.A.1.23) family. Expressed in roots, leaves, stems and panicles.

The protein resides in the nucleus membrane. Functionally, required for mycorrhizal symbiosis. The sequence is that of Probable ion channel POLLUX from Oryza sativa subsp. japonica (Rice).